A 1165-amino-acid polypeptide reads, in one-letter code: Disease resistance protein RPS4B (1165 aa).

The TIR domain occupies Pro-12 to Leu-174. Glu-86 is a catalytic residue. In terms of domain architecture, NB-ARC spans Lys-211–Gln-474. One copy of the LRR 1 repeat lies at Ser-592 to Pro-613. The LRR 2; degenerate repeat unit spans residues Leu-614–Asp-635. 6 LRR repeats span residues Pro-636–Thr-659, Asn-684–Asn-703, Leu-704–Pro-725, Glu-726–Leu-748, Leu-772–Lys-794, and Ser-795–Tyr-818. The stretch at Leu-819 to Gln-836 is one LRR 9; degenerate repeat. The LRR 10 repeat unit spans residues Val-837–Tyr-863.

Belongs to the disease resistance TIR-NB-LRR family. In terms of assembly, interacts with RRS1B. RPS4B-RRS1B heterodimer interacts with the bacterial effectors AvrRps4 and PopP2.

Its subcellular location is the nucleus. The enzyme catalyses NAD(+) + H2O = ADP-D-ribose + nicotinamide + H(+). Its function is as follows. Disease resistance (R) protein that specifically recognizes the AvrRps4 type III effector avirulence protein from P.syringae. Heterodimerization with RRS1B is required to form a functional complex to recognize AvrRps4 and to mediate the hypersensitive response. In Arabidopsis thaliana (Mouse-ear cress), this protein is Disease resistance protein RPS4B.